A 601-amino-acid polypeptide reads, in one-letter code: ATP-dependent lipid A-core flippase (601 aa).

An ABC transmembrane type-1 domain is found at 28-328; sequence LLSVCGLIVY…LTRVNAEFQR (301 aa). The next 6 membrane-spanning stretches (helical) occupy residues 32–52, 81–101, 160–180, 183–203, 267–287, and 296–316; these read CGLI…GPFI, VLLM…FANF, ALIS…LMFY, WKLS…ITIV, AVSQ…VLYA, and DLTA…LQPI. Positions 360-597 constitute an ABC transporter domain; it reads LRFDNVSFSY…GGMYAKLYQM (238 aa). 394–401 serves as a coordination point for ATP; that stretch reads GRSGSGKS.

The protein belongs to the ABC transporter superfamily. Lipid exporter (TC 3.A.1.106) family. In terms of assembly, homodimer.

It localises to the cell inner membrane. It catalyses the reaction ATP + H2O + lipid A-core oligosaccharideSide 1 = ADP + phosphate + lipid A-core oligosaccharideSide 2.. In terms of biological role, involved in lipopolysaccharide (LPS) biosynthesis. Translocates lipid A-core from the inner to the outer leaflet of the inner membrane. Transmembrane domains (TMD) form a pore in the inner membrane and the ATP-binding domain (NBD) is responsible for energy generation. This Shewanella sp. (strain MR-4) protein is ATP-dependent lipid A-core flippase.